The primary structure comprises 62 residues: Sec-independent protein translocase protein TatA (62 aa).

The helical transmembrane segment at 1–21 (MFGIGIPELLVIFVLILLVFG) threads the bilayer.

The protein belongs to the TatA/E family. As to quaternary structure, the Tat system comprises two distinct complexes: a TatABC complex, containing multiple copies of TatA, TatB and TatC subunits, and a separate TatA complex, containing only TatA subunits. Substrates initially bind to the TatABC complex, which probably triggers association of the separate TatA complex to form the active translocon.

The protein localises to the cell inner membrane. Functionally, part of the twin-arginine translocation (Tat) system that transports large folded proteins containing a characteristic twin-arginine motif in their signal peptide across membranes. TatA could form the protein-conducting channel of the Tat system. In Oleidesulfovibrio alaskensis (strain ATCC BAA-1058 / DSM 17464 / G20) (Desulfovibrio alaskensis), this protein is Sec-independent protein translocase protein TatA.